The following is a 291-amino-acid chain: Diaminopimelate epimerase (291 aa).

Substrate is bound by residues N13, Q46, and N66. Catalysis depends on C75, which acts as the Proton donor. Residues 76–77 (GN), N170, N203, and 221–222 (ER) contribute to the substrate site. The Proton acceptor role is filled by C230. Residue 231–232 (GS) coordinates substrate.

It belongs to the diaminopimelate epimerase family. In terms of assembly, homodimer.

It is found in the cytoplasm. It carries out the reaction (2S,6S)-2,6-diaminopimelate = meso-2,6-diaminopimelate. It participates in amino-acid biosynthesis; L-lysine biosynthesis via DAP pathway; DL-2,6-diaminopimelate from LL-2,6-diaminopimelate: step 1/1. In terms of biological role, catalyzes the stereoinversion of LL-2,6-diaminopimelate (L,L-DAP) to meso-diaminopimelate (meso-DAP), a precursor of L-lysine and an essential component of the bacterial peptidoglycan. The protein is Diaminopimelate epimerase of Albidiferax ferrireducens (strain ATCC BAA-621 / DSM 15236 / T118) (Rhodoferax ferrireducens).